We begin with the raw amino-acid sequence, 479 residues long: MFSGVVMAWQKAQGCLKESLSKDVYSLWIAPLESVRQENGVVSLAGPDRYFIAFVKQNYLKEIERSLTGVDSSITDVRFLEKKAVPQLRSMMHRTSTSAPTFPVPSVSSASTASTASTASSASSVPRQLRLPSVPKNNASIRALHPRYTFDEFMVGQSNILAESACRAISADADTVGPCLYINSGTGLGKSHLTHAVAHHLLSNSPMTRMHYVTAQQFSAEMVHGIKNNSMDMFKKKYQEDCDILLVEDIHTLKGKKKTQEELNEVLDTLVKSGKRVLLTANAAPRELAGIDGEFRSRMSAGLITSIQAPDIKTRSRIVERKAAGQRLSFDEDMTSYLAQNVRGDVRQIESAITAIGARARLMGGYIDMNLIREVVGSVVGCNQSLSSSLIRDLISAQFQVSVEDLQSRSRKKSISLPRQIAMYLSRKFTEESLAEIGRTYKRDHSTVIHSVKVITDKARRDMSLGAQVNLLSDKVKQI.

The segment at 1-74 (MFSGVVMAWQ…RSLTGVDSSI (74 aa)) is domain I, interacts with DnaA modulators. The interval 74-142 (ITDVRFLEKK…SVPKNNASIR (69 aa)) is domain II. Residues 143-360 (ALHPRYTFDE…SAITAIGARA (218 aa)) are domain III, AAA+ region. Gly187, Gly189, Lys190, and Ser191 together coordinate ATP. The tract at residues 361-479 (RLMGGYIDMN…NLLSDKVKQI (119 aa)) is domain IV, binds dsDNA.

The protein belongs to the DnaA family. As to quaternary structure, oligomerizes as a right-handed, spiral filament on DNA at oriC.

The protein localises to the cytoplasm. Its function is as follows. Plays an essential role in the initiation and regulation of chromosomal replication. ATP-DnaA binds to the origin of replication (oriC) to initiate formation of the DNA replication initiation complex once per cell cycle. Binds the DnaA box (a 9 base pair repeat at the origin) and separates the double-stranded (ds)DNA. Forms a right-handed helical filament on oriC DNA; dsDNA binds to the exterior of the filament while single-stranded (ss)DNA is stabiized in the filament's interior. The ATP-DnaA-oriC complex binds and stabilizes one strand of the AT-rich DNA unwinding element (DUE), permitting loading of DNA polymerase. After initiation quickly degrades to an ADP-DnaA complex that is not apt for DNA replication. Binds acidic phospholipids. The protein is Chromosomal replication initiator protein DnaA of Desulfotalea psychrophila (strain LSv54 / DSM 12343).